The chain runs to 341 residues: HTH-type sugar sensing transcriptional regulator TrmBL1 (341 aa).

Residues 32–53 (SKATDVTKESGIPHTRIYDVLS) constitute a DNA-binding region (H-T-H motif).

This sequence belongs to the transcriptional regulator TrmB family. As to quaternary structure, homotetramer. Forms homooctamers in the presence of maltotriose or maltose.

With respect to regulation, repressor activity is regulated by binding of different sugars to TrmBL1. Binding of maltose and maltotriose results in derepression of the target genes. However, high sugar concentration results in formation of octamers with high affinity for DNA, which may prevent transcription of target genes. In terms of biological role, global transcriptional repressor of the maltodextrin transport gene cluster (mdxE operon) and most likely of all genes encoding glycolytic enzymes. Acts by binding to the conserved TGM (Thermococcales-Glycolytic-Motif) sequences in their promoter region. Can also interact with non-TGM sequences. The sequence is that of HTH-type sugar sensing transcriptional regulator TrmBL1 (trmBL1) from Pyrococcus furiosus (strain ATCC 43587 / DSM 3638 / JCM 8422 / Vc1).